Reading from the N-terminus, the 215-residue chain is Secretory component protein psh3 (215 aa).

The Cytoplasmic segment spans residues 1–21 (MAKRSIFRFADEKGLKVAARY). Residues 22–42 (GVLMSTSFIFALLFHSSVADV) form a helical membrane-spanning segment. At 43–67 (NTLWSPGPESAFDAAETYYTLVAGS) the chain is on the extracellular side. Residues 68–88 (HFIVKYTVYTIMGLNMIFHLI) form a helical membrane-spanning segment. At 89–105 (QATGAKGDDKLFFYSST) the chain is on the cytoplasmic side. A helical membrane pass occupies residues 106-126 (LLYLTALILFIVNVAPSMLVV). The Extracellular segment spans residues 127–147 (KLQNYVQFPRNMHLSVLAASH). Residues 148 to 168 (VLVEFLLAGVILIQLGYVFGY) form a helical membrane-spanning segment. At 169–215 (HVQSIQQREYAEDMREQELAEKAKLESESATTQSVETVSTESVSKRK) the chain is on the cytoplasmic side. The tract at residues 190 to 215 (KAKLESESATTQSVETVSTESVSKRK) is disordered. A compositionally biased stretch (low complexity) spans 196-215 (ESATTQSVETVSTESVSKRK).

The protein to yeast SHR3. In terms of assembly, monomer.

It localises to the endoplasmic reticulum membrane. Involved in amino acid permease processing and required for the efficient translocation of structurally related amino acid permeases from the endoplasmic reticulum to the plasma membrane. This Schizosaccharomyces pombe (strain 972 / ATCC 24843) (Fission yeast) protein is Secretory component protein psh3 (psh3).